Here is a 394-residue protein sequence, read N- to C-terminus: MRAQTLPAGSDHAPVLACGAWLKNAACLLRGAEVLWSPIHGDLGDPANCDALDQSVEQLLDSAHGQVQAVAHDLHPDFYSTQLAQRLAARLCVPAVAVQHHHAHIAALMAEYDLREPVIGLALDGVGLGTDGTAWGGELLWVSPSEWCRLGHLQSLPLPGGDVAAREPWRMAAAALHVLDRTGEIGRRYGAVVGEQAARTVAAMLERQLNCPRSSSAGRWFDAAAGALGVSVRQQAEAQAAIALEALAADYLSALSPPECVGTYVVDQDGVLDLRGLLEQLFALADEGQAGQAARGAALFHVALAEALVGWAADAAQGHGLKTVALGGGCFMNGILSASVQAGLAARGLQALLPRAVSCGDAGLALGQAWVAARQPTAALAPQTHLQEEGAPCA.

This sequence belongs to the carbamoyltransferase HypF family.

The protein is Carbamoyltransferase HypF homolog (hypF1) of Cupriavidus necator (strain ATCC 17699 / DSM 428 / KCTC 22496 / NCIMB 10442 / H16 / Stanier 337) (Ralstonia eutropha).